The following is a 137-amino-acid chain: Large ribosomal subunit protein uL16 (137 aa).

This sequence belongs to the universal ribosomal protein uL16 family. In terms of assembly, part of the 50S ribosomal subunit.

Binds 23S rRNA and is also seen to make contacts with the A and possibly P site tRNAs. In Streptococcus mutans serotype c (strain ATCC 700610 / UA159), this protein is Large ribosomal subunit protein uL16.